Consider the following 511-residue polypeptide: 2-isopropylmalate synthase (511 aa).

In terms of domain architecture, Pyruvate carboxyltransferase spans 6–269 (IIIFDTTLRD…YTDIKCENIF (264 aa)). Mn(2+) contacts are provided by aspartate 15, histidine 203, histidine 205, and asparagine 239. The tract at residues 394 to 511 (VIEKLSVISG…SLKVEERKMA (118 aa)) is regulatory domain.

Belongs to the alpha-IPM synthase/homocitrate synthase family. LeuA type 1 subfamily. As to quaternary structure, homodimer. The cofactor is Mn(2+).

Its subcellular location is the cytoplasm. It catalyses the reaction 3-methyl-2-oxobutanoate + acetyl-CoA + H2O = (2S)-2-isopropylmalate + CoA + H(+). It participates in amino-acid biosynthesis; L-leucine biosynthesis; L-leucine from 3-methyl-2-oxobutanoate: step 1/4. In terms of biological role, catalyzes the condensation of the acetyl group of acetyl-CoA with 3-methyl-2-oxobutanoate (2-ketoisovalerate) to form 3-carboxy-3-hydroxy-4-methylpentanoate (2-isopropylmalate). The chain is 2-isopropylmalate synthase from Campylobacter jejuni subsp. jejuni serotype O:23/36 (strain 81-176).